Consider the following 1158-residue polypeptide: ATP-dependent helicase/deoxyribonuclease subunit B (1158 aa).

The region spanning 1–275 is the UvrD-like helicase ATP-binding domain; it reads MTLHAYLGRA…QYFNQLYRFN (275 aa). Residue 8–15 participates in ATP binding; the sequence is GRAGTGKS. Residues 269–583 enclose the UvrD-like helicase C-terminal domain; sequence NQLYRFNNQD…SIGTMDLAKV (315 aa). The [4Fe-4S] cluster site is built by cysteine 784, cysteine 1112, cysteine 1115, and cysteine 1121.

The protein belongs to the helicase family. AddB/RexB type 1 subfamily. In terms of assembly, heterodimer of AddA and AddB. Requires Mg(2+) as cofactor. [4Fe-4S] cluster is required as a cofactor.

Its function is as follows. The heterodimer acts as both an ATP-dependent DNA helicase and an ATP-dependent, dual-direction single-stranded exonuclease. Recognizes the chi site generating a DNA molecule suitable for the initiation of homologous recombination. The AddB subunit has 5' -&gt; 3' nuclease activity but not helicase activity. The sequence is that of ATP-dependent helicase/deoxyribonuclease subunit B from Staphylococcus aureus (strain MSSA476).